The following is a 620-amino-acid chain: Carotenoid isomerooxygenase (620 aa).

Positions 211, 267, and 337 each coordinate Fe cation. The tract at residues 440 to 459 (NGKQATAGEESPKRDAKRGR) is disordered. Residues 449 to 459 (ESPKRDAKRGR) show a composition bias toward basic and acidic residues. Position 612 (histidine 612) interacts with Fe cation.

This sequence belongs to the carotenoid oxygenase family. Requires Fe(2+) as cofactor. Expression follows organogenesis of the larval Bolwig's organ (BO), which mediates larval photophobic behavior. In the adult, expression is restricted exclusively to the brain. Expressed in both neuronal cells and glia cells. Not active within photoreceptors. Active within neuronal cells within the central nervous system.

It catalyses the reaction all-trans-zeaxanthin + O2 = (3R)-11-cis-3-hydroxyretinal + (3R)-all-trans-3-hydroxyretinal. Its pathway is cofactor metabolism; retinol metabolism. Catalyzes the oxidative cleavage at the 15,15'-double bond of carotenoids and the simultaneous all-trans to 11-cis isomerization of one cleavage product. Carotenoids like 11-cis retinal can promote visual pigment biogenesis in the dark. Essential for the biosynthesis of the 3-hydroxyretinal chromophore of rhodopsin from zeaxanthin and for proper photoreceptor development. Also essential for larval light perception. In Drosophila melanogaster (Fruit fly), this protein is Carotenoid isomerooxygenase (ninaB).